Here is a 726-residue protein sequence, read N- to C-terminus: MAR-binding filament-like protein 1 (726 aa).

The N-terminal 41 residues, 1–41 (MGFLIGGSCFVPSVPLHSRFLSSPSSSSSSSPSSSQFGLLC), are a transit peptide targeting the chloroplast. The N-terminal 54 residues, 42–95 (SSNVAKFKRRRPTLASLNQEDGYEYDVASAKRRAFLLVGISVLPFLQLRSPALA), are a transit peptide targeting the thylakoid. Residues 96-124 (DERGNEIKTSKVDLETEVAVVSEGTSPNP) lie on the Lumenal, thylakoid side of the membrane. The chain crosses the membrane as a helical span at residues 125 to 145 (FLALLNGLGIFSAGVLGALYA). The stretch at 144-691 (YALARQDTKA…KGEILRMRSQ (548 aa)) forms a coiled coil. Residues 146 to 726 (LARQDTKAAE…VRRRKSSTSS (581 aa)) lie on the Stromal side of the membrane. The tract at residues 678–726 (LGSAKGEILRMRSQPDSVKAVNSTDNKEKSDNTVTVKKVVRRRKSSTSS) is disordered. The segment covering 691-701 (QPDSVKAVNST) has biased composition (polar residues). Positions 715-722 (KVVRRRKS) match the Nuclear localization signal motif. Basic residues predominate over residues 715–726 (KVVRRRKSSTSS).

As to quaternary structure, interacts with PTST2; the interaction is essential for the initiation of starch granules biosynthesis in leaf chloroplasts, for the correct location of the process in the stromal spaces between the thylakoid membranes, and for the association of PTST2 with the thylakoid membranes. In terms of processing, predicted to be translocated into the thylakoid by the Tat system. The position of the transit peptide cleavages have not been experimentally proven.

It is found in the plastid. It localises to the chloroplast. Its subcellular location is the chloroplast thylakoid membrane. The protein localises to the chloroplast stroma. The protein resides in the chloroplast nucleoid. It is found in the nucleus. It localises to the nucleus matrix. Its function is as follows. DNA-binding protein required for the initiation of starch granules biosynthesis in leaf chloroplasts. Anchored to the thylakoid membranes with its C-terminus facing into the stroma where it is essential for localizing PTST2 and SS4 to the stromal spaces between the thylakoid membranes in order to begin starch granule formation. Associated with leaf chloroplastic nucleoids in vivo. Binds to various chloroplastic double-stranded DNA fragments without particular sequence specificity in vitro. May function at the interface between nucleoids and thylakoids possibly by anchoring nucleoids to the thylakoid membrane system in mature chloroplasts. Likely to participate in nuclear architecture by connecting chromatin with the nuclear matrix and potentially with the nuclear envelope. This chain is MAR-binding filament-like protein 1, found in Arabidopsis thaliana (Mouse-ear cress).